Consider the following 245-residue polypeptide: 1-(5-phosphoribosyl)-5-[(5-phosphoribosylamino)methylideneamino] imidazole-4-carboxamide isomerase (245 aa).

The active-site Proton acceptor is the aspartate 7. Aspartate 129 serves as the catalytic Proton donor.

It belongs to the HisA/HisF family.

It localises to the cytoplasm. It carries out the reaction 1-(5-phospho-beta-D-ribosyl)-5-[(5-phospho-beta-D-ribosylamino)methylideneamino]imidazole-4-carboxamide = 5-[(5-phospho-1-deoxy-D-ribulos-1-ylimino)methylamino]-1-(5-phospho-beta-D-ribosyl)imidazole-4-carboxamide. It functions in the pathway amino-acid biosynthesis; L-histidine biosynthesis; L-histidine from 5-phospho-alpha-D-ribose 1-diphosphate: step 4/9. The sequence is that of 1-(5-phosphoribosyl)-5-[(5-phosphoribosylamino)methylideneamino] imidazole-4-carboxamide isomerase from Escherichia coli O17:K52:H18 (strain UMN026 / ExPEC).